The sequence spans 205 residues: Large ribosomal subunit protein uL4 (205 aa).

Positions 56-78 (ISGTTAKPYRQKHTGRARQGSLR) are disordered.

It belongs to the universal ribosomal protein uL4 family. As to quaternary structure, part of the 50S ribosomal subunit.

Its function is as follows. One of the primary rRNA binding proteins, this protein initially binds near the 5'-end of the 23S rRNA. It is important during the early stages of 50S assembly. It makes multiple contacts with different domains of the 23S rRNA in the assembled 50S subunit and ribosome. In terms of biological role, forms part of the polypeptide exit tunnel. The sequence is that of Large ribosomal subunit protein uL4 from Ehrlichia canis (strain Jake).